The chain runs to 644 residues: Exoribonuclease 2 (644 aa).

An RNB domain is found at 189–516 (REDLTALDFV…NHRLLKAVIK (328 aa)). The 83-residue stretch at 561–643 (DTRFAAEIVD…ETRSIIARPV (83 aa)) folds into the S1 motif domain.

This sequence belongs to the RNR ribonuclease family. RNase II subfamily.

Its subcellular location is the cytoplasm. The catalysed reaction is Exonucleolytic cleavage in the 3'- to 5'-direction to yield nucleoside 5'-phosphates.. Involved in mRNA degradation. Hydrolyzes single-stranded polyribonucleotides processively in the 3' to 5' direction. The sequence is that of Exoribonuclease 2 from Escherichia coli O45:K1 (strain S88 / ExPEC).